The primary structure comprises 40 residues: Natriuretic peptide PtNP-a (40 aa).

Cysteine 9 and cysteine 25 form a disulfide bridge. The segment covering isoleucine 17–lysine 34 has biased composition (polar residues). The segment at isoleucine 17–serine 40 is disordered.

Belongs to the natriuretic peptide family. As to expression, expressed by the venom gland.

The protein localises to the secreted. Its function is as follows. Snake venom natriuretic peptide that targets NPR1 and possibly NPR2. Exhibits hypotensive and vasodepressor activities. Recombinant PtNP-a demonstrates a dose-dependent stimulation of cGMP production via the natriuretic peptide receptor 1 (NPR1) (EC(50)=563 nM) in Madine Darby Canine Kidney (MDCK) cells. It also inhibits the angiotensin converting enzyme (ACE). The protein is Natriuretic peptide PtNP-a of Pseudonaja textilis (Eastern brown snake).